Consider the following 366-residue polypeptide: tRNA-specific 2-thiouridylase MnmA (366 aa).

ATP is bound by residues 10 to 17 (GLSGGVDS) and isoleucine 36. Cysteine 98 functions as the Nucleophile in the catalytic mechanism. Cysteine 98 and cysteine 194 form a disulfide bridge. Glycine 122 provides a ligand contact to ATP. The interval 144–146 (KDQ) is interaction with tRNA. Cysteine 194 serves as the catalytic Cysteine persulfide intermediate. The segment at 303 to 304 (RY) is interaction with tRNA.

The protein belongs to the MnmA/TRMU family.

It is found in the cytoplasm. The enzyme catalyses S-sulfanyl-L-cysteinyl-[protein] + uridine(34) in tRNA + AH2 + ATP = 2-thiouridine(34) in tRNA + L-cysteinyl-[protein] + A + AMP + diphosphate + H(+). Its function is as follows. Catalyzes the 2-thiolation of uridine at the wobble position (U34) of tRNA, leading to the formation of s(2)U34. This chain is tRNA-specific 2-thiouridylase MnmA, found in Chlorobaculum tepidum (strain ATCC 49652 / DSM 12025 / NBRC 103806 / TLS) (Chlorobium tepidum).